Here is a 539-residue protein sequence, read N- to C-terminus: Cytochrome P450 monooxygenase buaD (539 aa).

Positions 1–16 (MLVPVLTLLGTLTATG) are cleaved as a signal peptide. Asparagine 120 carries an N-linked (GlcNAc...) asparagine glycan. Cysteine 478 lines the heme pocket. Asparagine 520 is a glycosylation site (N-linked (GlcNAc...) asparagine).

This sequence belongs to the cytochrome P450 family. The cofactor is heme.

It participates in mycotoxin biosynthesis. Cytochrome P450 monooxygenase; part of the gene cluster that mediates the biosynthesis of burnettramic acids, an unusual class of bolaamphiphilic pyrrolizidinediones that display potent antibacterial, antifungal, and cytotoxic activities. The first step of the biosynthesis of burnettramic acids is the hydroxylation of proline by the proline hydroxylase buaE to generate 4-hydroxyproline. The PKS-NRPS buaA and trans-enoyl reductase buaC construct the highly reduced polyketide chain, and the condensation (C) domain of buaA then catalyzes the amide bond formation with the activated 4-hydroxyproline. This is followed by the R domain releasing the nascent polyketide-peptide directly via a Dieckmann condensation to afford a tetramic acid fused to the hydroxyproline, generating the bicyclic pyrrolidinedione moiety. The cytochrome P450 monooxygenases buaD and buaG are likely responsible for the multiple hydroxylations on the polyketide chain and its terminus, although in the heterologous context, buaD does not appear to be required. Therefore, while buaG may be a multifunctional cytochrome P450 monooxygenase, it cannot be ruled out that the two secondary alcohols on the polyketide chain could have an acetate origin. Finally, the glycosyltransferase buaB transfers beta-D-mannose to the aglycone burnettramic acid A to form burnettramic acid A. Burnettramic acid B is a minor cis-pyrrolizidine epimer of burnettramic acid A and it is likely that small amounts of it form naturally in acidic environments. The chain is Cytochrome P450 monooxygenase buaD from Petromyces alliaceus (Aspergillus alliaceus).